The chain runs to 262 residues: Thiazole synthase (262 aa).

The active-site Schiff-base intermediate with DXP is the Lys98. 1-deoxy-D-xylulose 5-phosphate contacts are provided by residues Gly159, 186-187, and 208-209; these read AG and NT.

The protein belongs to the ThiG family. Homotetramer. Forms heterodimers with either ThiH or ThiS.

The protein localises to the cytoplasm. It carries out the reaction [ThiS sulfur-carrier protein]-C-terminal-Gly-aminoethanethioate + 2-iminoacetate + 1-deoxy-D-xylulose 5-phosphate = [ThiS sulfur-carrier protein]-C-terminal Gly-Gly + 2-[(2R,5Z)-2-carboxy-4-methylthiazol-5(2H)-ylidene]ethyl phosphate + 2 H2O + H(+). Its pathway is cofactor biosynthesis; thiamine diphosphate biosynthesis. Catalyzes the rearrangement of 1-deoxy-D-xylulose 5-phosphate (DXP) to produce the thiazole phosphate moiety of thiamine. Sulfur is provided by the thiocarboxylate moiety of the carrier protein ThiS. In vitro, sulfur can be provided by H(2)S. The sequence is that of Thiazole synthase from Hahella chejuensis (strain KCTC 2396).